The sequence spans 366 residues: MSGSSMGRLFTVTSFGESHGPGIGCVVDGCPPGLALSEADIQLELDRRKPGTSRHVTQRREPDTVEILSGVYEGKTTGTPIALLIRNTDQRSKDYGNIADTFRPGHADYCYWHKYGTRDPRGGGRSSARETAVRVAAGAIAKKWLNEKYGIVIRGHMTQIGEVAIPFKSWEHVGGNPFFSADPDIVPRLEEYMDSIRKSLDSIGARLRVVADNVPVGWGEPVFDRLDADIAYAMMSINAVKGVEIGAGFGCVTQKGSEHGDELTPRGFASNHAGGVLGGISTGQQIDVSIAIKPTSSIAQPRRSINKQGEAVTMETHGRHDPCVGIRATPIAEAMLALVLIDHALRHRAQCGDVRVETPRIAGHIG.

Arg48 and Arg54 together coordinate NADP(+). Residues 125–127 (RSS), 238–239 (NA), Gly278, 293–297 (KPTSS), and Arg319 contribute to the FMN site.

This sequence belongs to the chorismate synthase family. In terms of assembly, homotetramer. Requires FMNH2 as cofactor.

It catalyses the reaction 5-O-(1-carboxyvinyl)-3-phosphoshikimate = chorismate + phosphate. It functions in the pathway metabolic intermediate biosynthesis; chorismate biosynthesis; chorismate from D-erythrose 4-phosphate and phosphoenolpyruvate: step 7/7. Functionally, catalyzes the anti-1,4-elimination of the C-3 phosphate and the C-6 proR hydrogen from 5-enolpyruvylshikimate-3-phosphate (EPSP) to yield chorismate, which is the branch point compound that serves as the starting substrate for the three terminal pathways of aromatic amino acid biosynthesis. This reaction introduces a second double bond into the aromatic ring system. The chain is Chorismate synthase from Chromobacterium violaceum (strain ATCC 12472 / DSM 30191 / JCM 1249 / CCUG 213 / NBRC 12614 / NCIMB 9131 / NCTC 9757 / MK).